Here is a 376-residue protein sequence, read N- to C-terminus: Chaperone protein DnaJ (376 aa).

The 66-residue stretch at 5–70 (DYYEVLGVKK…QKRAAYDQYG (66 aa)) folds into the J domain. The CR-type zinc finger occupies 131-209 (GVTKEIRIPT…CHGHGRVEKS (79 aa)). Residues Cys-144, Cys-147, Cys-161, Cys-164, Cys-183, Cys-186, Cys-197, and Cys-200 each coordinate Zn(2+). CXXCXGXG motif repeat units follow at residues 144 to 151 (CDVCHGSG), 161 to 168 (CSTCRGAG), 183 to 190 (CPTCHGSG), and 197 to 204 (CNKCHGHG).

The protein belongs to the DnaJ family. Homodimer. The cofactor is Zn(2+).

It is found in the cytoplasm. Functionally, participates actively in the response to hyperosmotic and heat shock by preventing the aggregation of stress-denatured proteins and by disaggregating proteins, also in an autonomous, DnaK-independent fashion. Unfolded proteins bind initially to DnaJ; upon interaction with the DnaJ-bound protein, DnaK hydrolyzes its bound ATP, resulting in the formation of a stable complex. GrpE releases ADP from DnaK; ATP binding to DnaK triggers the release of the substrate protein, thus completing the reaction cycle. Several rounds of ATP-dependent interactions between DnaJ, DnaK and GrpE are required for fully efficient folding. Also involved, together with DnaK and GrpE, in the DNA replication of plasmids through activation of initiation proteins. This Yersinia enterocolitica serotype O:8 / biotype 1B (strain NCTC 13174 / 8081) protein is Chaperone protein DnaJ.